The chain runs to 1104 residues: Valine--tRNA ligase, mitochondrial (1104 aa).

The N-terminal 47 residues, 1–47 (MNKWLNTLSKTFTFRLLNCHYRRSLPLCQNFSLKKSLTHNQVRFFKM), are a transit peptide targeting the mitochondrion. A Phosphoserine modification is found at Ser73. The interval 99-119 (KKNAAATTGASQKKPKKKKEV) is disordered. A 'HIGH' region motif is present at residues 190–200 (PNVTGALHIGH). 2 positions are modified to phosphoserine: Ser294 and Ser332. The 'KMSKS' region motif lies at 703 to 707 (KMSKS). Residue Lys706 participates in ATP binding. Ser707 is modified (phosphoserine). Position 1003 is a phosphothreonine (Thr1003).

It belongs to the class-I aminoacyl-tRNA synthetase family.

It localises to the cytoplasm. Its subcellular location is the mitochondrion. The catalysed reaction is tRNA(Val) + L-valine + ATP = L-valyl-tRNA(Val) + AMP + diphosphate. This is Valine--tRNA ligase, mitochondrial (VAS1) from Saccharomyces cerevisiae (strain ATCC 204508 / S288c) (Baker's yeast).